The sequence spans 263 residues: GTP cyclohydrolase 1 type 2 homolog (263 aa).

The a divalent metal cation site is built by His76, His77, Asp113, His231, and Glu235.

Belongs to the GTP cyclohydrolase I type 2/NIF3 family. As to quaternary structure, homohexamer.

This Deinococcus radiodurans (strain ATCC 13939 / DSM 20539 / JCM 16871 / CCUG 27074 / LMG 4051 / NBRC 15346 / NCIMB 9279 / VKM B-1422 / R1) protein is GTP cyclohydrolase 1 type 2 homolog.